We begin with the raw amino-acid sequence, 214 residues long: Ribosomal RNA small subunit methyltransferase G (214 aa).

S-adenosyl-L-methionine contacts are provided by residues glycine 77, phenylalanine 82, 128-129 (VE), and arginine 143.

It belongs to the methyltransferase superfamily. RNA methyltransferase RsmG family.

The protein localises to the cytoplasm. The enzyme catalyses guanosine(527) in 16S rRNA + S-adenosyl-L-methionine = N(7)-methylguanosine(527) in 16S rRNA + S-adenosyl-L-homocysteine. Its function is as follows. Specifically methylates the N7 position of guanine in position 527 of 16S rRNA. The chain is Ribosomal RNA small subunit methyltransferase G from Nitrosomonas europaea (strain ATCC 19718 / CIP 103999 / KCTC 2705 / NBRC 14298).